The chain runs to 469 residues: Dihydrolipoyl dehydrogenase (469 aa).

Residues 40-48, Lys-57, and Ala-120 contribute to the FAD site; that span reads EKASLGGVC. A disulfide bridge connects residues Cys-48 and Cys-53. NAD(+) is bound by residues 186–190, Glu-209, and 275–278; these read GGGAI and AVGV. FAD is bound by residues Asp-317 and Ala-325. His-450 serves as the catalytic Proton acceptor.

The protein belongs to the class-I pyridine nucleotide-disulfide oxidoreductase family. Homodimer. It depends on FAD as a cofactor.

The protein resides in the cytoplasm. The catalysed reaction is N(6)-[(R)-dihydrolipoyl]-L-lysyl-[protein] + NAD(+) = N(6)-[(R)-lipoyl]-L-lysyl-[protein] + NADH + H(+). Functionally, lipoamide dehydrogenase is a component of the alpha-ketoacid dehydrogenase complexes. This chain is Dihydrolipoyl dehydrogenase (lpd), found in Chlorobaculum parvum (strain DSM 263 / NCIMB 8327) (Chlorobium vibrioforme subsp. thiosulfatophilum).